We begin with the raw amino-acid sequence, 359 residues long: RNA-binding protein 4B (359 aa).

2 consecutive RRM domains span residues 2–72 (VKLF…ASKN) and 78–148 (TKLH…LSTS). Residues 160 to 177 (SGCYRCGKEGHWSKECPV) form a CCHC-type zinc finger. Residues 196-359 (AVRPPYTMGY…YVDRARYSAF (164 aa)) are interaction with TNPO3.

Interacts with TNPO3, which may mediate nuclear import of the protein.

Its subcellular location is the nucleus. It localises to the nucleolus. Its function is as follows. Required for the translational activation of PER1 mRNA in response to circadian clock. Binds directly to the 3'-UTR of the PER1 mRNA. The protein is RNA-binding protein 4B (RBM4B) of Sus scrofa (Pig).